Reading from the N-terminus, the 94-residue chain is Small ribosomal subunit protein uS19 (94 aa).

The protein belongs to the universal ribosomal protein uS19 family.

Protein S19 forms a complex with S13 that binds strongly to the 16S ribosomal RNA. This Natranaerobius thermophilus (strain ATCC BAA-1301 / DSM 18059 / JW/NM-WN-LF) protein is Small ribosomal subunit protein uS19.